The chain runs to 803 residues: Translation initiation factor IF-2 (803 aa).

The span at 65–75 shows a compositional bias: basic and acidic residues; sequence PDKVEEKKEHT. Residues 65 to 186 are disordered; the sequence is PDKVEEKKEH…PKSRKSKTLK (122 aa). The segment covering 175–185 has biased composition (basic residues); the sequence is NKPKSRKSKTL. The tr-type G domain occupies 300–468; that stretch reads IRPPVVTIMG…ILLTADAALE (169 aa). The segment at 309–316 is G1; that stretch reads GHVDHGKT. Position 309–316 (309–316) interacts with GTP; the sequence is GHVDHGKT. The interval 334–338 is G2; sequence GITQH. Positions 355-358 are G3; sequence DTPG. GTP-binding positions include 355–359 and 409–412; these read DTPGH and NKID. Positions 409–412 are G4; that stretch reads NKID. The interval 445–447 is G5; that stretch reads SAK.

This sequence belongs to the TRAFAC class translation factor GTPase superfamily. Classic translation factor GTPase family. IF-2 subfamily.

It localises to the cytoplasm. In terms of biological role, one of the essential components for the initiation of protein synthesis. Protects formylmethionyl-tRNA from spontaneous hydrolysis and promotes its binding to the 30S ribosomal subunits. Also involved in the hydrolysis of GTP during the formation of the 70S ribosomal complex. This Tropheryma whipplei (strain Twist) (Whipple's bacillus) protein is Translation initiation factor IF-2.